A 1167-amino-acid polypeptide reads, in one-letter code: Phenyloxazoline synthase MbtB (1167 aa).

In terms of domain architecture, Carrier 1 spans 2 to 78 (EAVVTSSQTV…AWTRLVGERT (77 aa)). Residue Ser-39 is modified to O-(pantetheine 4'-phosphoryl)serine. Positions 78–100 (TAESPGAATQSGDTAASAGDPDA) are disordered. The condensation/cyclization stretch occupies residues 98–390 (PDAPFPLAPI…SSLMLDVDFT (293 aa)). The segment at 575–967 (TYAELRERVL…RIAGVEAAVA (393 aa)) is adenylation. One can recognise a Carrier 2 domain in the interval 1054 to 1130 (VPSTALERAL…ALARRLVDHE (77 aa)). O-(pantetheine 4'-phosphoryl)serine is present on Ser-1089.

The protein belongs to the ATP-dependent AMP-binding enzyme family. MbtB subfamily. Requires pantetheine 4'-phosphate as cofactor. Post-translationally, 4'-phosphopantetheine is transferred from CoA to a specific serine in each of the two carrier protein domains, leading to their activation from apo to holo forms.

It functions in the pathway siderophore biosynthesis; mycobactin biosynthesis. Its function is as follows. Involved in the initial steps of the mycobactin biosynthetic pathway. Putatively couples activated salicylic acid with serine or threonine and cyclizes this precursor to the hydroxyphenyloxazoline ring system present in this class of siderophores. This is Phenyloxazoline synthase MbtB (mbtB) from Mycobacterium sp. (strain MCS).